Reading from the N-terminus, the 131-residue chain is UPF0382 inner membrane protein YgdD (131 aa).

Residues 1 to 4 (MTSR) lie on the Periplasmic side of the membrane. The helical transmembrane segment at 5–25 (FMLIFAAISGFIFVALGAFGA) threads the bilayer. Residues 26–64 (HVLSKTMGAVEMGWIQTGLEYQAFHTLAILGLAVAMQRR) are Cytoplasmic-facing. Residues 65–85 (ISIWFYWSSVFLALGTVLFSG) traverse the membrane as a helical segment. At 86 to 97 (SLYCLALSHLRL) the chain is on the periplasmic side. A helical transmembrane segment spans residues 98–118 (WAFVTPVGGVSFLAGWALMLV). At 119–131 (GAIRLKRKGVSHE) the chain is on the cytoplasmic side.

Belongs to the UPF0382 family.

It localises to the cell inner membrane. This is UPF0382 inner membrane protein YgdD (ygdD) from Escherichia coli O157:H7.